We begin with the raw amino-acid sequence, 184 residues long: Glutathione-regulated potassium-efflux system ancillary protein KefG (184 aa).

It belongs to the NAD(P)H dehydrogenase (quinone) family. KefG subfamily. In terms of assembly, interacts with KefB.

The protein resides in the cell inner membrane. The enzyme catalyses a quinone + NADH + H(+) = a quinol + NAD(+). It carries out the reaction a quinone + NADPH + H(+) = a quinol + NADP(+). Functionally, regulatory subunit of a potassium efflux system that confers protection against electrophiles. Required for full activity of KefB. This Escherichia coli O8 (strain IAI1) protein is Glutathione-regulated potassium-efflux system ancillary protein KefG.